The primary structure comprises 531 residues: Histone-arginine methyltransferase CARMER (531 aa).

One can recognise an SAM-dependent MTase PRMT-type domain in the interval 141–450 (ASQYFQFYGY…QSYDVTIDLH (310 aa)). The S-adenosyl-L-methionine site is built by Q154, R163, G187, E209, E238, and T266. Residue R501 is modified to Asymmetric dimethylarginine; by autocatalysis.

Belongs to the class I-like SAM-binding methyltransferase superfamily. Protein arginine N-methyltransferase family. As to quaternary structure, homodimer. In terms of processing, the dimethylated protein is the major form.

Its subcellular location is the cytoplasm. It localises to the nucleus. It catalyses the reaction L-arginyl-[protein] + 2 S-adenosyl-L-methionine = N(omega),N(omega)-dimethyl-L-arginyl-[protein] + 2 S-adenosyl-L-homocysteine + 2 H(+). Functionally, methylates (mono- and asymmetric dimethylation) the guanidino nitrogens of arginyl residues in proteins. May methylate histone H3 at 'Arg-17' and activate transcription via chromatin remodeling. The protein is Histone-arginine methyltransferase CARMER (Art4) of Drosophila ananassae (Fruit fly).